Here is a 104-residue protein sequence, read N- to C-terminus: Phosphoribosyl-ATP pyrophosphatase (104 aa).

It belongs to the PRA-PH family.

The protein resides in the cytoplasm. The enzyme catalyses 1-(5-phospho-beta-D-ribosyl)-ATP + H2O = 1-(5-phospho-beta-D-ribosyl)-5'-AMP + diphosphate + H(+). The protein operates within amino-acid biosynthesis; L-histidine biosynthesis; L-histidine from 5-phospho-alpha-D-ribose 1-diphosphate: step 2/9. In Methanosarcina barkeri (strain Fusaro / DSM 804), this protein is Phosphoribosyl-ATP pyrophosphatase.